Here is a 241-residue protein sequence, read N- to C-terminus: Ribonuclease PH (241 aa).

Phosphate contacts are provided by residues R90 and 128-130 (GTR).

The protein belongs to the RNase PH family. As to quaternary structure, homohexameric ring arranged as a trimer of dimers.

It catalyses the reaction tRNA(n+1) + phosphate = tRNA(n) + a ribonucleoside 5'-diphosphate. Phosphorolytic 3'-5' exoribonuclease that plays an important role in tRNA 3'-end maturation. Removes nucleotide residues following the 3'-CCA terminus of tRNAs; can also add nucleotides to the ends of RNA molecules by using nucleoside diphosphates as substrates, but this may not be physiologically important. Probably plays a role in initiation of 16S rRNA degradation (leading to ribosome degradation) during starvation. The sequence is that of Ribonuclease PH from Corynebacterium diphtheriae (strain ATCC 700971 / NCTC 13129 / Biotype gravis).